The sequence spans 100 residues: UPF0213 protein YhbQ (100 aa).

Residues T2–R77 enclose the GIY-YIG domain.

Belongs to the UPF0213 family.

The protein is UPF0213 protein YhbQ of Escherichia coli (strain K12 / MC4100 / BW2952).